Consider the following 82-residue polypeptide: Small ribosomal subunit protein eS21y (82 aa).

M1 bears the N-acetylmethionine mark.

This sequence belongs to the eukaryotic ribosomal protein eS21 family.

The chain is Small ribosomal subunit protein eS21y (RPS21C) from Arabidopsis thaliana (Mouse-ear cress).